The sequence spans 394 residues: Nuclear hormone receptor family member nhr-18 (394 aa).

Residues 8-83 (SGSCEVCGDK…VGMDTRRFQT (76 aa)) constitute a DNA-binding region (nuclear receptor). 2 NR C4-type zinc fingers span residues 11–31 (CEVC…CRAC) and 48–71 (CPNG…LKKC). The region spanning 134–394 (MLQKPTNHVL…FSHPEMFEAT (261 aa)) is the NR LBD domain.

Belongs to the nuclear hormone receptor family.

The protein resides in the nucleus. Functionally, orphan nuclear receptor. The protein is Nuclear hormone receptor family member nhr-18 (nhr-18) of Caenorhabditis elegans.